The primary structure comprises 242 residues: Uridylate kinase (242 aa).

An ATP-binding site is contributed by 16–19 (KVSG). Gly-58 provides a ligand contact to UMP. ATP contacts are provided by Gly-59 and Arg-63. UMP contacts are provided by residues Asp-78 and 139-146 (TGNPFCTT). Thr-166, Gln-167, Tyr-172, and Asp-175 together coordinate ATP.

It belongs to the UMP kinase family. Homohexamer.

The protein localises to the cytoplasm. The catalysed reaction is UMP + ATP = UDP + ADP. It participates in pyrimidine metabolism; CTP biosynthesis via de novo pathway; UDP from UMP (UMPK route): step 1/1. Inhibited by UTP. Catalyzes the reversible phosphorylation of UMP to UDP. This is Uridylate kinase from Rickettsia conorii (strain ATCC VR-613 / Malish 7).